Reading from the N-terminus, the 635-residue chain is Thrombopoietin receptor (635 aa).

Residues 1–25 (MPSWALFMVTSCLLLAPQNLAQVSS) form the signal peptide. At 26-491 (QDVSLLASDS…RVETATETAW (466 aa)) the chain is on the extracellular side. 2 disulfide bridges follow: cysteine 40–cysteine 50 and cysteine 77–cysteine 93. N-linked (GlcNAc...) asparagine glycans are attached at residues asparagine 117 and asparagine 178. The Fibronectin type-III 1 domain maps to 172 to 281 (GPRDPKNSTG…WSLPVTVDLP (110 aa)). 4 disulfides stabilise this stretch: cysteine 193–cysteine 323, cysteine 194–cysteine 241, cysteine 291–cysteine 301, and cysteine 334–cysteine 352. Residues 205-232 (ALDQSPCAQPTMPWQDGPKQTSPSREAS) are disordered. An N-linked (GlcNAc...) asparagine glycan is attached at asparagine 298. An N-linked (GlcNAc...) asparagine glycan is attached at asparagine 358. A Fibronectin type-III 2 domain is found at 392–486 (PTPNLHWREI…WSDPTRVETA (95 aa)). Residues 474-478 (WSSWS) carry the WSXWS motif motif. Residues 492–513 (ISLVTALHLVLGLSAVLGLLLL) traverse the membrane as a helical segment. The Cytoplasmic portion of the chain corresponds to 514–635 (RWQFPAHYRR…YLPLSYWQQP (122 aa)). The Box 1 motif signature appears at 528–536 (LWPSLPDLH). Residues lysine 553 and lysine 573 each participate in a glycyl lysine isopeptide (Lys-Gly) (interchain with G-Cter in ubiquitin) cross-link. Phosphotyrosine occurs at positions 591, 626, and 631.

Belongs to the type I cytokine receptor family. Type 1 subfamily. In terms of assembly, homodimer. Interacts with ATXN2L. Interacts with JAK2 and TYK2; these interactions increase MPL localization to the cell membrane. Interacts with THPO. Interacts with SHIP/INPP5D. Interacts with BTK. Interacts with SYK; this interaction negatively regulates THPO-mediated ERK1/2 signaling. Post-translationally, phosphorylated at Tyr-591 in response to THPO stimulation. In terms of processing, ubiquitination at Lys-553 and Lys-573 targets MPL for degradation by both the lysosomal and proteasomal pathways. The E3 ubiquitin-protein ligase CBL significantly contributes to this ubiquitination. In terms of tissue distribution, expressed at a low level in a large number of cells of hematopoietic origin. Isoform 1 and isoform 2 are always found to be coexpressed.

The protein resides in the cell membrane. The protein localises to the golgi apparatus. It localises to the cell surface. In terms of biological role, receptor for thrombopoietin that regulates hematopoietic stem cell renewal, megakaryocyte differentiation, and platelet formation. Upon activation by THPO, induces rapid tyrosine phosphorylation and activation of JAK2, providing docking sites for many signaling proteins such as STAT5, SHIP/INPP5D, GRB2, SOS1 and PI3K. In turn, These signaling cascades lead to the proliferation, survival, and differentiation of megakaryocytes, ultimately leading to increased platelet production. The polypeptide is Thrombopoietin receptor (MPL) (Homo sapiens (Human)).